A 183-amino-acid chain; its full sequence is CKLF-like MARVEL transmembrane domain-containing protein 6 (183 aa).

The residue at position 1 (methionine 1) is an N-acetylmethionine. Positions 1-20 (MENGAVYSPTTEEDPGPARG) are disordered. Residues 1–39 (MENGAVYSPTTEEDPGPARGPRSGLAAYCFLGRLPLLRR) are Cytoplasmic-facing. Serine 8 is modified (phosphoserine). Residues 33 to 160 (RLPLLRRVLK…DFVTMLYEKR (128 aa)) enclose the MARVEL domain. A helical membrane pass occupies residues 40 to 60 (VLKGLQLSLSLLAFICEEVVS). Residues 61-67 (QCTLCGG) lie on the Extracellular side of the membrane. Residues 68–88 (LYFFEFVSCSAFLLSLLILIV) form a helical membrane-spanning segment. Over 89–106 (YCTPFYERVDTTKVKSSD) the chain is Cytoplasmic. The helical transmembrane segment at 107–127 (FYITLGTGCVFLLASIIFVST) threads the bilayer. Topologically, residues 128 to 134 (HDRTSAE) are extracellular. The helical transmembrane segment at 135-155 (IAAIVFGFIASFMFLLDFVTM) threads the bilayer. Residues 156–183 (LYEKRQESQLRKSENTTRAEALTEPLNA) are Cytoplasmic-facing. Threonine 171 is subject to Phosphothreonine.

The protein belongs to the chemokine-like factor family. As to quaternary structure, interacts with PD-L1/CD274 (via transmembrane domain); the interaction is direct. Interacts with CMTM4. Interacts with CD58, ARG1, ENO1 and TMPO.

It localises to the cell membrane. The protein localises to the early endosome membrane. It is found in the recycling endosome membrane. Functionally, master regulator of recycling and plasma membrane expression of PD-L1/CD274, an immune inhibitory ligand critical for immune tolerance to self and antitumor immunity. Associates with both constitutive and IFNG-induced PD-L1/CD274 at recycling endosomes, where it protects PD-L1/CD274 from being targeted for lysosomal degradation, likely by preventing its ubiquitination. May stabilize PD-L1/CD274 expression on antigen presenting cells and potentiates inhibitory signaling by PDCD1/CD279, its receptor on T-cells, ultimately triggering T-cell anergy. The chain is CKLF-like MARVEL transmembrane domain-containing protein 6 (CMTM6) from Pongo abelii (Sumatran orangutan).